A 193-amino-acid polypeptide reads, in one-letter code: Non-specific lipid transfer protein GPI-anchored 2 (193 aa).

An N-terminal signal peptide occupies residues 1–22 (MSNVVVIAVVLIVASLTGHVSA). Disulfide bonds link Cys-38–Cys-83, Cys-48–Cys-67, Cys-68–Cys-110, and Cys-81–Cys-120. Asn-44 is a glycosylation site (N-linked (GlcNAc...) asparagine). The disordered stretch occupies residues 143–164 (APGSMSGAESPGGFGSGPSASR). The GPI-anchor amidated glycine moiety is linked to residue Gly-165. The propeptide at 166–193 (SDAPSSAPYSLFLNLIIFPLAFAFYIFC) is removed in mature form.

Belongs to the plant LTP family. O-glycosylated on hydroxyprolines; noncontiguous hydroxylproline residues are glycosylated with arabinogalactan. In terms of tissue distribution, up-regulated in the epidermis of top stems. Expressed in roots, cotyledons, seedlings, leaves, stems, buds, flower and silique walls. Preferentially expressed in the shoot apical meristem and the root meristem. Also detected in expanding leaves and petals, developing flowers, and elongating pistils, stamens and siliques.

Its subcellular location is the cell membrane. In terms of biological role, lipid transfer protein that, together with LTPG1, binds to lipids and functions as a component of the cuticular lipid export machinery that performs extensive export of intracellular lipids (e.g. C29 alkane) from epidermal cells to the surface to build the cuticular wax layer and silique walls. Contributes to pre-invasive defense against some non-host powdery mildew pathogens by preventing the penetration of the epidermal cell wall by the fungal agents (e.g. Blumeria graminis f. sp. hordei (Bgh)). Involved in seed and ovule maturation and development, probably by regulating the fatty acids homeostasis during suberin and sporopollenin biosynthesis or deposition. The sequence is that of Non-specific lipid transfer protein GPI-anchored 2 from Arabidopsis thaliana (Mouse-ear cress).